The chain runs to 515 residues: Ribosome assembly protein 4 (515 aa).

Positions 20–128 (REVAIIPKDL…LLYTPRAVFK (109 aa)) are interaction with MDN1. The ubiquitin-like (UBL) domain stretch occupies residues 29-125 (LPNVSIKFQA…QITLLYTPRA (97 aa)). 8 WD repeats span residues 141–181 (GHGS…PMHT), 184–223 (GHYNWVLCVSWSPDGEVIATGSMDNTIRLWDPKSGQCLGD), 227–273 (GHSK…CQYT), 276–314 (GHTNSVSCVKWGGQGLLYSGSHDRTVRVWDINSQGRCIN), 352–396 (AQKK…KPIA), 400–439 (GHQKLVNHVAFSPDGRYIVSASFDNSIKLWDGRDGKFIST), 442–481 (GHVASVYQVAWSSDCRLLVSCSKDTTLKVWDVRTRKLSVD), and 484–515 (GHKDEVYTVDWSVDGKRVCSGGKDKMVRLWTH).

The protein belongs to the NLE1/RSA4 family. Associates with the pre-60S ribosomal particle. Interacts (via WD repeats) with uL18 (RPL5). Interacts (via UBL domain) with MDN1 (via VWFA/MIDAS domain). Interacts (via WD repeats) with NSA2.

It localises to the nucleus. The protein localises to the nucleolus. Functionally, involved in ribosome biogenesis. Required for processing and efficient intra-nuclear transport of pre-60S ribosomal subunits. Interacts with the AAA-ATPase Midasin (MDN1/REA1), which is essential for the ATP-dependent dissociation of a group of nonribosomal factors from the pre-60S particle. The chain is Ribosome assembly protein 4 from Saccharomyces cerevisiae (strain ATCC 204508 / S288c) (Baker's yeast).